The chain runs to 1065 residues: Carbamoyl phosphate synthase large chain (1065 aa).

The tract at residues 1–401 (MPKRRDIETI…SLLKAVRSLE (401 aa)) is carboxyphosphate synthetic domain. Positions 129, 169, 175, 176, 208, 210, 215, 241, 242, 243, 284, and 298 each coordinate ATP. Residues 133 to 327 (RALMNELGEP…IAKLAAKIAV (195 aa)) form the ATP-grasp 1 domain. 3 residues coordinate Mg(2+): glutamine 284, glutamate 298, and asparagine 300. 3 residues coordinate Mn(2+): glutamine 284, glutamate 298, and asparagine 300. The segment at 402–546 (IGVHHLELNE…YSTYEEENES (145 aa)) is oligomerization domain. Residues 547 to 929 (IVTEKPSVIV…ALYKGLVASG (383 aa)) are carbamoyl phosphate synthetic domain. One can recognise an ATP-grasp 2 domain in the interval 671–861 (EQALSELGIP…MANLATKAIL (191 aa)). ATP contacts are provided by arginine 707, arginine 746, isoleucine 748, glutamate 752, glycine 777, valine 778, histidine 779, serine 780, glutamine 820, and glutamate 832. Positions 820, 832, and 834 each coordinate Mg(2+). The Mn(2+) site is built by glutamine 820, glutamate 832, and asparagine 834. Residues 930–1065 (IHIQPHGAVL…TAMTEGLVRS (136 aa)) form the MGS-like domain. Positions 930-1065 (IHIQPHGAVL…TAMTEGLVRS (136 aa)) are allosteric domain.

It belongs to the CarB family. Composed of two chains; the small (or glutamine) chain promotes the hydrolysis of glutamine to ammonia, which is used by the large (or ammonia) chain to synthesize carbamoyl phosphate. Tetramer of heterodimers (alpha,beta)4. Mg(2+) is required as a cofactor. The cofactor is Mn(2+).

It carries out the reaction hydrogencarbonate + L-glutamine + 2 ATP + H2O = carbamoyl phosphate + L-glutamate + 2 ADP + phosphate + 2 H(+). The catalysed reaction is hydrogencarbonate + NH4(+) + 2 ATP = carbamoyl phosphate + 2 ADP + phosphate + 2 H(+). It participates in amino-acid biosynthesis; L-arginine biosynthesis; carbamoyl phosphate from bicarbonate: step 1/1. The protein operates within pyrimidine metabolism; UMP biosynthesis via de novo pathway; (S)-dihydroorotate from bicarbonate: step 1/3. Its function is as follows. Large subunit of the glutamine-dependent carbamoyl phosphate synthetase (CPSase). CPSase catalyzes the formation of carbamoyl phosphate from the ammonia moiety of glutamine, carbonate, and phosphate donated by ATP, constituting the first step of 2 biosynthetic pathways, one leading to arginine and/or urea and the other to pyrimidine nucleotides. The large subunit (synthetase) binds the substrates ammonia (free or transferred from glutamine from the small subunit), hydrogencarbonate and ATP and carries out an ATP-coupled ligase reaction, activating hydrogencarbonate by forming carboxy phosphate which reacts with ammonia to form carbamoyl phosphate. The polypeptide is Carbamoyl phosphate synthase large chain (Bacillus caldolyticus).